The sequence spans 358 residues: Protein-glutamate methylesterase/protein-glutamine glutaminase 2 (358 aa).

In terms of domain architecture, Response regulatory spans 7-124; sequence SVLLVDDSAV…KNFLIESAAE (118 aa). Asp-58 carries the 4-aspartylphosphate modification. Positions 170-358 constitute a CheB-type methylesterase domain; it reads AQTTERIVAI…QEIHQAILHR (189 aa). Residues Ser-182, His-208, and Asp-304 contribute to the active site.

Belongs to the CheB family. In terms of processing, phosphorylated by CheA. Phosphorylation of the N-terminal regulatory domain activates the methylesterase activity.

The protein localises to the cytoplasm. It carries out the reaction [protein]-L-glutamate 5-O-methyl ester + H2O = L-glutamyl-[protein] + methanol + H(+). The catalysed reaction is L-glutaminyl-[protein] + H2O = L-glutamyl-[protein] + NH4(+). Involved in chemotaxis. Part of a chemotaxis signal transduction system that modulates chemotaxis in response to various stimuli. Catalyzes the demethylation of specific methylglutamate residues introduced into the chemoreceptors (methyl-accepting chemotaxis proteins or MCP) by CheR. Also mediates the irreversible deamidation of specific glutamine residues to glutamic acid. The chain is Protein-glutamate methylesterase/protein-glutamine glutaminase 2 from Pseudomonas syringae pv. tomato (strain ATCC BAA-871 / DC3000).